We begin with the raw amino-acid sequence, 505 residues long: Ribosomal RNA small subunit methyltransferase F (505 aa).

S-adenosyl-L-methionine contacts are provided by residues 123-129 (ASAPGSK), Glu-147, Asp-174, and Asp-192. Cys-245 (nucleophile) is an active-site residue. The interval 409 to 437 (GTNANNNSNTNPNNNANTNPNNNSNTNPR) is disordered. Positions 410 to 435 (TNANNNSNTNPNNNANTNPNNNSNTN) are enriched in low complexity.

This sequence belongs to the class I-like SAM-binding methyltransferase superfamily. RsmB/NOP family.

The protein localises to the cytoplasm. The enzyme catalyses cytidine(1407) in 16S rRNA + S-adenosyl-L-methionine = 5-methylcytidine(1407) in 16S rRNA + S-adenosyl-L-homocysteine + H(+). Functionally, specifically methylates the cytosine at position 1407 (m5C1407) of 16S rRNA. The protein is Ribosomal RNA small subunit methyltransferase F of Shewanella denitrificans (strain OS217 / ATCC BAA-1090 / DSM 15013).